Consider the following 416-residue polypeptide: Gamma-glutamyl phosphate reductase (416 aa).

It belongs to the gamma-glutamyl phosphate reductase family.

The protein resides in the cytoplasm. The enzyme catalyses L-glutamate 5-semialdehyde + phosphate + NADP(+) = L-glutamyl 5-phosphate + NADPH + H(+). It participates in amino-acid biosynthesis; L-proline biosynthesis; L-glutamate 5-semialdehyde from L-glutamate: step 2/2. Catalyzes the NADPH-dependent reduction of L-glutamate 5-phosphate into L-glutamate 5-semialdehyde and phosphate. The product spontaneously undergoes cyclization to form 1-pyrroline-5-carboxylate. The sequence is that of Gamma-glutamyl phosphate reductase from Streptococcus pyogenes serotype M1.